The chain runs to 175 residues: Apoptosis regulator Bcl-2 homolog (175 aa).

The segment at 37-42 is mediates interaction with human NOP53 and localization to host nucleolus; that stretch reads KLYITG. The chain crosses the membrane as a helical span at residues 153–173; it reads MTALLGSIALLATILAAVAMS.

Belongs to the Bcl-2 family. In terms of assembly, interacts with human NOP53; may sequester ORF16 in host nucleolus and reduce its antiapoptotic activity. Interacts with ORF55.

The protein resides in the host membrane. Its subcellular location is the host mitochondrion. It is found in the host nucleus. It localises to the host nucleolus. Functionally, plays a role in the protection against apoptosis mediated by cytotoxic cells during the immune response to acute and persistent viral infection. Contributes therefore to latency establishment. Also plays a role in the inhibition of host starvation-induced autophagy which ultimately contributes to the viral chronic infection. Also participates in the viral genome replication within host nucleus. The chain is Apoptosis regulator Bcl-2 homolog (vBCL2) from Homo sapiens (Human).